A 417-amino-acid polypeptide reads, in one-letter code: Phosphoglycerate kinase 2 (417 aa).

N-acetylserine is present on serine 2. A phosphoserine mark is found at serine 2 and serine 4. At lysine 11 the chain carries N6-acetyllysine. The (2R)-3-phosphoglycerate site is built by valine 23, aspartate 24, phenylalanine 25, asparagine 26, glutamine 38, and arginine 39. Lysine 48 carries the N6-acetyllysine modification. The (2R)-3-phosphoglycerate site is built by serine 62, histidine 63, glycine 65, and arginine 66. An N6-acetyllysine mark is found at lysine 75, lysine 86, and lysine 97. (2R)-3-phosphoglycerate-binding residues include leucine 122 and arginine 123. N6-acetyllysine is present on residues lysine 131 and lysine 146. Positions 170 and 171 each coordinate (2R)-3-phosphoglycerate. Tyrosine 196 bears the Phosphotyrosine mark. N6-acetyllysine is present on lysine 199. Residue glycine 214 participates in ADP binding. A CDP-binding site is contributed by glycine 214. Residues alanine 215 and lysine 216 each coordinate AMP. Alanine 215 is an ATP binding site. Alanine 215 is a binding site for Mg(2+). Mg(2+) contacts are provided by alanine 218 and aspartate 219. Aspartate 219 is a CDP binding site. An AMP-binding site is contributed by lysine 220. Lysine 220 provides a ligand contact to ATP. Position 238 (glycine 238) interacts with ADP. Position 238 (glycine 238) interacts with CDP. AMP is bound at residue glycine 239. Glycine 239 contacts ATP. An N6-acetyllysine mark is found at lysine 267 and lysine 291. Glycine 313 is a binding site for AMP. Glycine 313 contacts ATP. Residues glycine 338, valine 340, and phenylalanine 343 each contribute to the CDP site. ADP is bound at residue phenylalanine 343. Glutamate 344 provides a ligand contact to AMP. ATP contacts are provided by glutamate 344, aspartate 375, and threonine 376. Aspartate 375 is a Mg(2+) binding site.

The protein belongs to the phosphoglycerate kinase family. Monomer. The cofactor is Mg(2+).

The protein localises to the cytoplasm. It catalyses the reaction (2R)-3-phosphoglycerate + ATP = (2R)-3-phospho-glyceroyl phosphate + ADP. It participates in carbohydrate degradation; glycolysis; pyruvate from D-glyceraldehyde 3-phosphate: step 2/5. Essential for sperm motility and male fertility but is not required for the completion of spermatogenesis. This Equus caballus (Horse) protein is Phosphoglycerate kinase 2 (PGK2).